Consider the following 74-residue polypeptide: MSSGGLLLLLGLLTLWGVLTPVSSKDRPKKPGLCPPRPQKPCVKECKNDWSCSGQQKCCNYGCIDECRDPIFVN.

The first 24 residues, 1–24 (MSSGGLLLLLGLLTLWGVLTPVSS), serve as a signal peptide directing secretion. A WAP domain is found at 27–71 (RPKKPGLCPPRPQKPCVKECKNDWSCSGQQKCCNYGCIDECRDPI). Intrachain disulfides connect cysteine 34–cysteine 59, cysteine 42–cysteine 63, cysteine 46–cysteine 58, and cysteine 52–cysteine 67.

Belongs to the venom waprin family. In terms of tissue distribution, expressed by the venom gland.

It is found in the secreted. Its function is as follows. Damages membranes of susceptible bacteria. Has no hemolytic activity. Not toxic to mice. Does not inhibit the proteinases elastase and cathepsin G. The polypeptide is Auswaprin-a (Pseudechis australis (Mulga snake)).